The sequence spans 413 residues: 1-acylglycerol-3-phosphate O-acyltransferase Pnpla3 (413 aa).

Over methionine 1–threonine 42 the chain is Cytoplasmic. The 170-residue stretch at leucine 10–lysine 179 folds into the PNPLA domain. The short motif at glycine 14–glycine 19 is the GXGXXG element. The helical; Signal-anchor for type II membrane protein transmembrane segment at phenylalanine 43–glycine 63 threads the bilayer. The GXSXG motif lies at glycine 45–glycine 49. The Nucleophile role is filled by serine 47. The Lumenal segment spans residues arginine 64–leucine 413. The Proton acceptor role is filled by aspartate 166. The short motif at aspartate 166–glycine 168 is the DGA/G element. Asparagine 206 and asparagine 209 each carry an N-linked (GlcNAc...) asparagine glycan. A disordered region spans residues lysine 389 to leucine 413. Basic residues predominate over residues methionine 394–proline 403.

In terms of tissue distribution, restricted to adipose tissue. Expressed in inguinal and epididymal white adipose tissues and in interscapular brown adipose tissue. Also expressed in liver in response to high-sucrose diet.

The protein localises to the membrane. Its subcellular location is the lipid droplet. It carries out the reaction a 1-acyl-sn-glycero-3-phosphate + an acyl-CoA = a 1,2-diacyl-sn-glycero-3-phosphate + CoA. The enzyme catalyses a triacylglycerol + H2O = a diacylglycerol + a fatty acid + H(+). It catalyses the reaction a 1-acylglycerol + a 1,3-diacylglycerol = a triacylglycerol + glycerol. The catalysed reaction is a 1-acylglycerol + a 1,2-diacylglycerol = a triacylglycerol + glycerol. It carries out the reaction 2 a 1-acylglycerol = a 1,2-diacylglycerol + glycerol. The enzyme catalyses 1-(9Z-octadecenoyl)-sn-glycero-3-phosphate + (9Z)-octadecenoyl-CoA = 1,2-di-(9Z-octadecenoyl)-sn-glycero-3-phosphate + CoA. It catalyses the reaction 1-(9Z-octadecenoyl)-sn-glycero-3-phosphate + hexadecanoyl-CoA = 1-(9Z)-octadecenoyl-2-hexadecanoyl-sn-glycero-3-phosphate + CoA. The catalysed reaction is 1-(9Z-octadecenoyl)-sn-glycero-3-phosphate + (9Z,12Z)-octadecadienoyl-CoA = 1-(9Z)-octadecenoyl-2-(9Z,12Z)-octadecadienoyl-sn-glycero-3-phosphate + CoA. It carries out the reaction 1-(9Z-octadecenoyl)-sn-glycero-3-phosphate + (5Z,8Z,11Z,14Z)-eicosatetraenoyl-CoA = 1-(9Z)-octadecenoyl-2-(5Z,8Z,11Z,14Z)-eicosatetraenoyl-sn-glycero-3-phosphate + CoA. The enzyme catalyses 2 1-(9Z-octadecenoyl)-glycerol = 1,2-di-(9Z-octadecenoyl)-glycerol + glycerol. It catalyses the reaction 1-(9Z-octadecenoyl)-glycerol + 1,2-di-(9Z-octadecenoyl)-glycerol = 1,2,3-tri-(9Z-octadecenoyl)-glycerol + glycerol. The catalysed reaction is 1-(9Z-octadecenoyl)-glycerol + 1,3-di-(9Z-octadecenoyl)-glycerol = 1,2,3-tri-(9Z-octadecenoyl)-glycerol + glycerol. It carries out the reaction 1,2,3-tri-(9Z-octadecenoyl)-glycerol + H2O = 1,3-di-(9Z-octadecenoyl)-glycerol + (9Z)-octadecenoate + H(+). The enzyme catalyses a 1,2-diacyl-sn-glycero-3-phosphocholine + H2O = a 1-acyl-sn-glycero-3-phosphocholine + a fatty acid + H(+). It participates in phospholipid metabolism. It functions in the pathway glycerolipid metabolism. Functionally, specifically catalyzes coenzyme A (CoA)-dependent acylation of 1-acyl-sn-glycerol 3-phosphate (2-lysophosphatidic acid/LPA) to generate phosphatidic acid (PA), an important metabolic intermediate and precursor for both triglycerides and glycerophospholipids. Does not esterify other lysophospholipids. Acyl donors are long chain (at least C16) fatty acyl-CoAs: arachidonoyl-CoA, linoleoyl-CoA, oleoyl-CoA and at a lesser extent palmitoyl-CoA. Additionally possesses low triacylglycerol lipase and CoA-independent acylglycerol transacylase activities and thus may play a role in acyl-chain remodeling of triglycerides. In vitro may express hydrolytic activity against glycerolipids triacylglycerol, diacylglycerol and monoacylglycerol, with a strong preference for oleic acid as the acyl moiety. However, the triacylglycerol hydrolase activity is controversial and may be very low. Possesses phospholipase A2 activity. The polypeptide is 1-acylglycerol-3-phosphate O-acyltransferase Pnpla3 (Mus musculus (Mouse)).